Consider the following 715-residue polypeptide: Transcription factor MST12 (715 aa).

Low complexity predominate over residues 214–224 (SSSFNAQQVSF). Disordered stretches follow at residues 214–243 (SSSFNAQQVSFPPSQSTSPVMRAMDSMPPP), 439–469 (AAHRPSDLRRSVSASVGPVAEGDESLDNSPP), and 518–539 (PMPSEDMTSPMDDRSRPMAQGG). 2 C2H2-type zinc fingers span residues 564-588 (HSCPIPTCGRLFKRLEHLKRHVRTH) and 594-616 (YICPYCSKAFSRSDNLAQHKRTH). Residues 632-691 (EEEYSGDDHLGSLEEASPTSEGGYVTSSLNSAMAHSNTSQHPGSNAVSPNPGPMSHAPTY) form a disordered region. A compositionally biased stretch (polar residues) spans 648–679 (SPTSEGGYVTSSLNSAMAHSNTSQHPGSNAVS).

The protein belongs to the STE12 transcription factor family.

It is found in the nucleus. Functionally, transcription factor that may function downstream of PMK1 to regulate genes involved in infectious hyphae growth. Is not essential for vegetative growth, conidiation or appressorium formation. May be involved in the regulation of the expression of the cell surface sensor MSB2. The chain is Transcription factor MST12 from Pyricularia oryzae (strain 70-15 / ATCC MYA-4617 / FGSC 8958) (Rice blast fungus).